The following is a 276-amino-acid chain: Ammonia monooxygenase alpha subunit (276 aa).

Transmembrane regions (helical) follow at residues 29-49 (VYFPILIILLVGTYHMHFMLL), 66-86 (PVVTPIVGITYCSAIMYYLWV), 96-116 (LCVVCLLIGEWLTRYWGFYWW), 123-143 (FVTPGIMLPGALMLDFTLYLT), and 150-170 (ALVGGGFFGLLFYPGNWPIFG). Asp187, His191, and His204 together coordinate Cu(+). Residues 219 to 239 (VIAAFFSAFVSMLMFTVWWYL) form a helical membrane-spanning segment.

As to quaternary structure, the soluble ammonia monooxygenase is a nonamer composed of three alpha subunits (AmoA), three beta subunits (AmoB) and three gamma subunits (Cytochrome c1 PetC). It depends on Cu(+) as a cofactor.

Its subcellular location is the cell membrane. The protein localises to the cytoplasm. The catalysed reaction is AH2 + NH4(+) + O2 = hydroxylamine + A + H2O + H(+). In vitro, inhibited by acetylene. In fact, acetylene is oxidized to ketene which binds irreversibly to His-191 of ammonia monooxygenase alpha subunit (AmoA). Functionally, part of the ammonia monooxygenase complex, which catalyzes the oxidation of ammonia to hydroxylamine, the first reaction in the process of ammonia oxidation to nitrite. The polypeptide is Ammonia monooxygenase alpha subunit (Nitrosomonas europaea (strain ATCC 19718 / CIP 103999 / KCTC 2705 / NBRC 14298)).